The chain runs to 371 residues: Histidinol-phosphate aminotransferase 2 (371 aa).

Lysine 232 carries the N6-(pyridoxal phosphate)lysine modification.

This sequence belongs to the class-II pyridoxal-phosphate-dependent aminotransferase family. Histidinol-phosphate aminotransferase subfamily. As to quaternary structure, homodimer. It depends on pyridoxal 5'-phosphate as a cofactor.

The enzyme catalyses L-histidinol phosphate + 2-oxoglutarate = 3-(imidazol-4-yl)-2-oxopropyl phosphate + L-glutamate. It functions in the pathway amino-acid biosynthesis; L-histidine biosynthesis; L-histidine from 5-phospho-alpha-D-ribose 1-diphosphate: step 7/9. The protein is Histidinol-phosphate aminotransferase 2 of Methylococcus capsulatus (strain ATCC 33009 / NCIMB 11132 / Bath).